The following is an 892-amino-acid chain: DNA mismatch repair protein MutS (892 aa).

Residue 607 to 614 (GPNMSGKS) coordinates ATP. The tract at residues 826–854 (ETKAETEEESQLSFFGGEQSSKKQDKPVL) is disordered. Over residues 845-854 (SSKKQDKPVL) the composition is skewed to basic and acidic residues.

It belongs to the DNA mismatch repair MutS family.

Functionally, this protein is involved in the repair of mismatches in DNA. It is possible that it carries out the mismatch recognition step. This protein has a weak ATPase activity. This is DNA mismatch repair protein MutS from Bacillus cereus (strain AH187).